Consider the following 596-residue polypeptide: Leucine zipper putative tumor suppressor 1 (596 aa).

The N-myristoyl glycine moiety is linked to residue Gly2. Disordered regions lie at residues 136–193 and 295–324; these read AILH…SYQL and YEERPRRCRDELEGPEPKGGNKLKQASQKS. Positions 153 to 162 are enriched in basic and acidic residues; sequence PPDKPKEQEL. Residues 178–190 show a composition bias toward low complexity; the sequence is SMSSLPTHSTSSS. The stretch at 256 to 374 forms a coiled coil; the sequence is ISTDECSIQE…SYEREKTSFG (119 aa). Basic and acidic residues predominate over residues 295–310; sequence YEERPRRCRDELEGPE.

Belongs to the LZTS family. Binds EEF1G, TLK2 and CDK1. In terms of processing, phosphorylated on serine residues. Hyperphosphorylated by the cAMP-dependent kinase PKA during cell-cycle progression. In terms of tissue distribution, highly expressed in testis, prostate, spleen, thymus, ovary and brain. Detected at lower levels in heart, placenta, small intestine, colon, liver, kidney, skeletal muscle and pancreas. Not detectable in primary tumors from breast and prostate and in many cancer cell lines.

It localises to the cytoplasm. The protein resides in the cell membrane. Its subcellular location is the cell projection. It is found in the dendritic spine. The protein localises to the postsynaptic density. It localises to the synapse. Functionally, involved in the regulation of cell growth. May stabilize the active CDC2-cyclin B1 complex and thereby contribute to the regulation of the cell cycle and the prevention of uncontrolled cell proliferation. May act as a tumor suppressor. This chain is Leucine zipper putative tumor suppressor 1 (LZTS1), found in Homo sapiens (Human).